The primary structure comprises 920 residues: Plasma membrane ATPase (920 aa).

A compositionally biased stretch (basic and acidic residues) spans 1 to 11 (MSDERITEKPP). The tract at residues 1–71 (MSDERITEKP…AEEDDGPAAA (71 aa)) is disordered. Residues 1–117 (MSDERITEKP…REESENLLVK (117 aa)) lie on the Cytoplasmic side of the membrane. Residues 17–50 (SEGEPVPEEEVEEETEEEVPDEQSSEDDDIDGLI) show a composition bias toward acidic residues. Residues 118–138 (FLMFFIGPIQFVMEAAAVLAA) traverse the membrane as a helical segment. The Extracellular segment spans residues 139–142 (GLED). A helical transmembrane segment spans residues 143-162 (WVDFGVICGLLFLNAGVGFI). The Cytoplasmic segment spans residues 163–293 (QEFQAGSIVE…GQGHFTEVLN (131 aa)). Residues 294–315 (GIGVILLVLVVITLLLIWTACF) form a helical membrane-spanning segment. The Extracellular segment spans residues 316–326 (YRTVRIVPILR). A helical membrane pass occupies residues 327-349 (YTLGITIVGVPVGLPAVVTTTMA). The Cytoplasmic portion of the chain corresponds to 350–721 (GGAAYLAKKQ…IAILNHSLDI (372 aa)). Asp380 (4-aspartylphosphate intermediate) is an active-site residue. Mg(2+)-binding residues include Asp636 and Asp640. Residues 722–740 (DLIVFIAIFADVATLAIAY) traverse the membrane as a helical segment. Over 741–756 (DNAPFSPSPVKWNLPR) the chain is Extracellular. A helical transmembrane segment spans residues 757-776 (LWGMSIMMGIILAAGTWITL). Residues 777-826 (TTMFLPKGGIIQNFGSIDGILFLEISLTENWLIFITRAVGPFWSSIPSWQ) are Cytoplasmic-facing. The helical transmembrane segment at 827–847 (LAGAVFVVDVVATMFTLFGWW) threads the bilayer. Topologically, residues 848–859 (SQNWTDIVTVVR) are extracellular. Residues 860-876 (IYIWSIGIFCCLGGAYY) traverse the membrane as a helical segment. Residues 877-920 (LMSESETFDRLMNGKPLKENKSTRSVEDFLASMRRVSTQHEKGN) are Cytoplasmic-facing.

It belongs to the cation transport ATPase (P-type) (TC 3.A.3) family. Type IIIA subfamily.

The protein resides in the cell membrane. The enzyme catalyses ATP + H2O + H(+)(in) = ADP + phosphate + 2 H(+)(out). Functionally, the plasma membrane ATPase of plants and fungi is a hydrogen ion pump. The proton gradient it generates drives the active transport of nutrients by H(+)-symport. The resulting external acidification and/or internal alkinization may mediate growth responses. The polypeptide is Plasma membrane ATPase (Zygosaccharomyces rouxii).